Reading from the N-terminus, the 386-residue chain is 4-hydroxy-3-methylbut-2-en-1-yl diphosphate synthase (flavodoxin) (386 aa).

[4Fe-4S] cluster-binding residues include cysteine 281, cysteine 284, cysteine 316, and glutamate 323.

This sequence belongs to the IspG family. The cofactor is [4Fe-4S] cluster.

It catalyses the reaction (2E)-4-hydroxy-3-methylbut-2-enyl diphosphate + oxidized [flavodoxin] + H2O + 2 H(+) = 2-C-methyl-D-erythritol 2,4-cyclic diphosphate + reduced [flavodoxin]. It functions in the pathway isoprenoid biosynthesis; isopentenyl diphosphate biosynthesis via DXP pathway; isopentenyl diphosphate from 1-deoxy-D-xylulose 5-phosphate: step 5/6. In terms of biological role, converts 2C-methyl-D-erythritol 2,4-cyclodiphosphate (ME-2,4cPP) into 1-hydroxy-2-methyl-2-(E)-butenyl 4-diphosphate. The chain is 4-hydroxy-3-methylbut-2-en-1-yl diphosphate synthase (flavodoxin) from Corynebacterium jeikeium (strain K411).